Reading from the N-terminus, the 201-residue chain is Large ribosomal subunit protein uL4 (201 aa).

Positions 46–71 are disordered; it reads QKTRAEITGSGKKPWRQKGTGRARSG.

This sequence belongs to the universal ribosomal protein uL4 family. In terms of assembly, part of the 50S ribosomal subunit.

Its function is as follows. One of the primary rRNA binding proteins, this protein initially binds near the 5'-end of the 23S rRNA. It is important during the early stages of 50S assembly. It makes multiple contacts with different domains of the 23S rRNA in the assembled 50S subunit and ribosome. Functionally, forms part of the polypeptide exit tunnel. The sequence is that of Large ribosomal subunit protein uL4 from Klebsiella pneumoniae (strain 342).